The following is a 417-amino-acid chain: FAD-dependent monooxygenase aptC (417 aa).

The signal sequence occupies residues 1-18; the sequence is MTLPVLIIGAGLSGLTTA. The FAD site is built by Glu-32, Ala-43, Arg-117, Asp-332, and Gly-345.

The protein belongs to the paxM FAD-dependent monooxygenase family. FAD serves as cofactor.

It catalyses the reaction 3,6,8,9-tetrahydroxy-1-oxo-3-(2-oxopropyl)-1,2,3,4-tetrahydroanthracene-2-carboxyl-[ACP] + NADPH + O2 + H(+) = 2,3,6,8,9-pentahydroxy-1-oxo-3-(2-oxopropyl)-1,2,3,4-tetrahydroanthracene-2-carboxyl-[ACP] + NADP(+) + H2O. The protein operates within secondary metabolite biosynthesis. Functionally, FAD-dependent monooxygenase; part of the gene cluster that mediates the biosynthesis of asperthecin, an anthraquinone pigment. Polyketide synthase (PKS) aptA catalyzes the formation of the aromatic polyketide from acetyl coenzyme A and seven malonyl coenzyme A molecules. Polyketide is subsequently hydrolyzed by the action of the hydrolase aptB into endocrocin-9-anthrone. Endocrocin-9-anthrone is then oxidized into endocrocin by the monooxygenase aptC. Endocrocin is likely to decarboxylate spontaneously to form emodin which explains why there is no decarboxylase in the asperthecin biosynthesis cluster. Finally, aptC or another endogenous oxygenase catalyzes additional oxidation steps to form asperthecin. In Emericella nidulans (strain FGSC A4 / ATCC 38163 / CBS 112.46 / NRRL 194 / M139) (Aspergillus nidulans), this protein is FAD-dependent monooxygenase aptC.